The following is a 330-amino-acid chain: Probable pectinesterase 55 (330 aa).

Positions 1-24 (MGTHRIILGLAALCCFCLPHLIEA) are cleaved as a signal peptide. 2 N-linked (GlcNAc...) asparagine glycosylation sites follow: Asn38 and Asn52. Asp161 functions as the Proton donor in the catalytic mechanism. Asp182 (nucleophile) is an active-site residue. Substrate contacts are provided by Arg243 and Trp245. 2 N-linked (GlcNAc...) asparagine glycosylation sites follow: Asn257 and Asn292.

This sequence belongs to the pectinesterase family.

It is found in the secreted. The protein resides in the cell wall. It catalyses the reaction [(1-&gt;4)-alpha-D-galacturonosyl methyl ester](n) + n H2O = [(1-&gt;4)-alpha-D-galacturonosyl](n) + n methanol + n H(+). The protein operates within glycan metabolism; pectin degradation; 2-dehydro-3-deoxy-D-gluconate from pectin: step 1/5. Acts in the modification of cell walls via demethylesterification of cell wall pectin. The sequence is that of Probable pectinesterase 55 (PME55) from Arabidopsis thaliana (Mouse-ear cress).